The following is a 1033-amino-acid chain: Isoleucine--tRNA ligase 2 (1033 aa).

Residues 47–57 (PTANGLPHVGH) carry the 'HIGH' region motif. A 'KMSKS' region motif is present at residues 590–594 (KMSKS). Lysine 593 serves as a coordination point for ATP.

This sequence belongs to the class-I aminoacyl-tRNA synthetase family. IleS type 2 subfamily. In terms of assembly, monomer. Zn(2+) serves as cofactor.

It localises to the cytoplasm. It carries out the reaction tRNA(Ile) + L-isoleucine + ATP = L-isoleucyl-tRNA(Ile) + AMP + diphosphate. Functionally, catalyzes the attachment of isoleucine to tRNA(Ile). As IleRS can inadvertently accommodate and process structurally similar amino acids such as valine, to avoid such errors it has two additional distinct tRNA(Ile)-dependent editing activities. One activity is designated as 'pretransfer' editing and involves the hydrolysis of activated Val-AMP. The other activity is designated 'posttransfer' editing and involves deacylation of mischarged Val-tRNA(Ile). This chain is Isoleucine--tRNA ligase 2, found in Bacillus thuringiensis subsp. konkukian (strain 97-27).